A 208-amino-acid polypeptide reads, in one-letter code: Protein Nef (208 aa).

The segment at Met1 to Gly33 is disordered. A lipid anchor (N-myristoyl glycine; by host) is attached at Gly2. Ser6 carries the post-translational modification Phosphoserine; by host. The span at Val15–Pro24 shows a compositional bias: basic and acidic residues. The acidic; interacts with host PACS1 and PACS2; stabilizes the interaction of NEF/MHC-I with host AP1M1; necessary for MHC-I internalization stretch occupies residues Glu64–Asp67. The segment at Pro71 to Pro80 is SH3-binding; interaction with Src family tyrosine kinases. A PxxP; stabilizes the interaction of NEF/MHC-I with host AP1M1; necessary for MHC-I internalization motif is present at residues Pro74 to Pro77. Residues Asp110 to Trp126 form a mediates dimerization, Nef-PTE1 interaction region. A binding to ATP6V1H region spans residues Val150 to Val182. Positions Leu166–Leu167 match the Dileucine internalization motif; necessary for CD4 internalization motif. Positions Asp176–Asp177 match the Diacidic; necessary for CD4 internalization motif.

Belongs to the lentivirus primate group Nef protein family. As to quaternary structure, monomer; cytosolic form. Homodimer; membrane bound form. Interacts with Nef associated p21-activated kinase (PAK2); this interaction activates PAK2. Associates with the Nef-MHC-I-AP1 complex; this complex is required for MHC-I internalization. Interacts (via C-terminus) with host PI3-kinase. Interacts with host PACS1; this interaction seems to be weak. Interacts with host PACS2. Interacts with host LCK and MAPK3; these interactions inhibit the kinase activity of the latter. Interacts with host ATP6V1H; this interaction may play a role in CD4 endocytosis. Associates with the CD4-Nef-AP2 complex; this complex is required for CD4 internalization. Interacts with host AP2 subunit alpha and AP2 subunit sigma2. Interacts with TCR-zeta chain; this interaction up-regulates the Fas ligand (FasL) surface expression. Interacts with host HCK, LYN, and SRC; these interactions activate the Src family kinases. Interacts with MAP3K5; this interaction inhibits the Fas and TNFR-mediated death signals. Interacts with beta-COP and PTE1. Interacts with human RACK1; this increases Nef phosphorylation by PKC. Interacts with TP53; this interaction decreases the half-life of TP53, protecting the infected cell against p53-mediated apoptosis. The virion-associated Nef proteins are cleaved by the viral protease to release the soluble C-terminal core protein. Nef is probably cleaved concomitantly with viral structural proteins on maturation of virus particles. Post-translationally, myristoylated. In terms of processing, phosphorylated on serine residues, probably by host PKCdelta and theta.

The protein resides in the host cell membrane. It localises to the virion. The protein localises to the secreted. It is found in the host Golgi apparatus membrane. In terms of biological role, factor of infectivity and pathogenicity, required for optimal virus replication. Alters numerous pathways of T-lymphocyte function and down-regulates immunity surface molecules in order to evade host defense and increase viral infectivity. Alters the functionality of other immunity cells, like dendritic cells, monocytes/macrophages and NK cells. In infected CD4(+) T-lymphocytes, down-regulates the surface MHC-I, mature MHC-II, CD4, CD28, CCR5 and CXCR4 molecules. Mediates internalization and degradation of host CD4 through the interaction of with the cytoplasmic tail of CD4, the recruitment of AP-2 (clathrin adapter protein complex 2), internalization through clathrin coated pits, and subsequent transport to endosomes and lysosomes for degradation. Diverts host MHC-I molecules to the trans-Golgi network-associated endosomal compartments by an endocytic pathway to finally target them for degradation. MHC-I down-regulation may involve AP-1 (clathrin adapter protein complex 1) or possibly Src family kinase-ZAP70/Syk-PI3K cascade recruited by PACS2. In consequence infected cells are masked for immune recognition by cytotoxic T-lymphocytes. Decreasing the number of immune receptors also prevents reinfection by more HIV particles (superinfection). Down-regulates host SERINC3 and SERINC5 thereby excluding these proteins from the viral particles. Virion infectivity is drastically higher when SERINC3 or SERINC5 are excluded from the viral envelope, because these host antiviral proteins impair the membrane fusion event necessary for subsequent virion penetration. Functionally, bypasses host T-cell signaling by inducing a transcriptional program nearly identical to that of anti-CD3 cell activation. Interaction with TCR-zeta chain up-regulates the Fas ligand (FasL). Increasing surface FasL molecules and decreasing surface MHC-I molecules on infected CD4(+) cells send attacking cytotoxic CD8+ T-lymphocytes into apoptosis. Its function is as follows. Plays a role in optimizing the host cell environment for viral replication without causing cell death by apoptosis. Protects the infected cells from apoptosis in order to keep them alive until the next virus generation is ready to strike. Inhibits the Fas and TNFR-mediated death signals by blocking MAP3K5/ASK1. Decreases the half-life of TP53, protecting the infected cell against p53-mediated apoptosis. Inhibits the apoptotic signals regulated by the Bcl-2 family proteins through the formation of a Nef/PI3-kinase/PAK2 complex that leads to activation of PAK2 and induces phosphorylation of host BAD. In terms of biological role, extracellular Nef protein targets CD4(+) T-lymphocytes for apoptosis by interacting with CXCR4 surface receptors. This Human immunodeficiency virus type 1 group M subtype B (isolate SF162) (HIV-1) protein is Protein Nef.